The sequence spans 197 residues: uncharacterized protein (197 aa).

The next 4 membrane-spanning stretches (helical) occupy residues 11–31 (IALI…ISAS), 85–105 (STFM…SIFV), 109–129 (AVVV…VVLF), and 174–194 (VGTG…YPFI).

It localises to the cell membrane. This is an uncharacterized protein from Methanocaldococcus jannaschii (strain ATCC 43067 / DSM 2661 / JAL-1 / JCM 10045 / NBRC 100440) (Methanococcus jannaschii).